We begin with the raw amino-acid sequence, 421 residues long: UPF0415 protein C7orf25 homolog (421 aa).

The protein belongs to the UPF0415 family.

The protein is UPF0415 protein C7orf25 homolog of Bos taurus (Bovine).